Reading from the N-terminus, the 206-residue chain is Large ribosomal subunit protein uL4 (206 aa).

This sequence belongs to the universal ribosomal protein uL4 family. In terms of assembly, part of the 50S ribosomal subunit.

In terms of biological role, one of the primary rRNA binding proteins, this protein initially binds near the 5'-end of the 23S rRNA. It is important during the early stages of 50S assembly. It makes multiple contacts with different domains of the 23S rRNA in the assembled 50S subunit and ribosome. Forms part of the polypeptide exit tunnel. The protein is Large ribosomal subunit protein uL4 of Cereibacter sphaeroides (strain KD131 / KCTC 12085) (Rhodobacter sphaeroides).